An 88-amino-acid chain; its full sequence is Small ribosomal subunit protein uS17 (88 aa).

It belongs to the universal ribosomal protein uS17 family. As to quaternary structure, part of the 30S ribosomal subunit.

Functionally, one of the primary rRNA binding proteins, it binds specifically to the 5'-end of 16S ribosomal RNA. The protein is Small ribosomal subunit protein uS17 of Methylorubrum extorquens (strain PA1) (Methylobacterium extorquens).